Consider the following 249-residue polypeptide: 3-deoxy-D-manno-octulosonic acid kinase (249 aa).

Aspartate 175 is a catalytic residue.

Belongs to the protein kinase superfamily. KdkA/RfaP family.

The protein resides in the cell inner membrane. It carries out the reaction an alpha-Kdo-(2-&gt;6)-lipid IVA + ATP = a 4-O-phospho-alpha-Kdo-(2-&gt;6)-lipid IVA + ADP + H(+). It participates in bacterial outer membrane biogenesis; LPS core biosynthesis. Catalyzes the ATP-dependent phosphorylation of the 3-deoxy-D-manno-octulosonic acid (Kdo) residue in Kdo-lipid IV(A) at the 4-OH position. This chain is 3-deoxy-D-manno-octulosonic acid kinase, found in Xanthomonas euvesicatoria pv. vesicatoria (strain 85-10) (Xanthomonas campestris pv. vesicatoria).